The sequence spans 498 residues: ATP synthase subunit beta, chloroplastic (498 aa).

172–179 (GGAGVGKT) is an ATP binding site.

This sequence belongs to the ATPase alpha/beta chains family. In terms of assembly, F-type ATPases have 2 components, CF(1) - the catalytic core - and CF(0) - the membrane proton channel. CF(1) has five subunits: alpha(3), beta(3), gamma(1), delta(1), epsilon(1). CF(0) has four main subunits: a(1), b(1), b'(1) and c(9-12).

Its subcellular location is the plastid. The protein localises to the chloroplast thylakoid membrane. The catalysed reaction is ATP + H2O + 4 H(+)(in) = ADP + phosphate + 5 H(+)(out). Produces ATP from ADP in the presence of a proton gradient across the membrane. The catalytic sites are hosted primarily by the beta subunits. The sequence is that of ATP synthase subunit beta, chloroplastic from Atropa belladonna (Belladonna).